The chain runs to 738 residues: Ethylene receptor 1 (738 aa).

The next 3 membrane-spanning stretches (helical) occupy residues 23–43 (ISDF…IYFV), 53–73 (WVLV…LINL), and 92–112 (VLTA…IPDL). 2 residues coordinate Cu cation: cysteine 65 and histidine 69. Residues 158–307 (DRHTILKTTL…VVADQVAVAL (150 aa)) enclose the GAF domain. The Histidine kinase domain occupies 350 to 585 (VMNHEMRTPM…IFDVKLGISE (236 aa)). Residue histidine 353 is modified to Phosphohistidine; by autocatalysis. Residues 470 to 473 (NAVK), aspartate 513, lysine 529, serine 544, and leucine 548 contribute to the ADP site. Positions 611–729 (KVLVMDENGV…NIRDVLSDLL (119 aa)) constitute a Response regulatory domain. A 4-aspartylphosphate modification is found at aspartate 659. A Glycyl lysine isopeptide (Lys-Gly) (interchain with G-Cter in ubiquitin) cross-link involves residue lysine 714.

It belongs to the ethylene receptor family. In terms of assembly, homodimer; disulfide-linked. Heteromer with ERS1, ERS2, ETR2 and EIN4. Interacts with AHP1, AHP2 and AHP3. Interacts with RTE1. Interacts with EIN2. Cu cation is required as a cofactor. Autophosphorylated. Phosphorylation at His-353 modulates the interaction with EIN2. In terms of tissue distribution, leaves, roots, stems, seedlings, flowers, anthers, carpels and ovules.

The protein localises to the endoplasmic reticulum membrane. The enzyme catalyses ATP + protein L-histidine = ADP + protein N-phospho-L-histidine.. Its function is as follows. Ethylene receptor related to bacterial two-component regulators. Acts as a redundant negative regulator of ethylene signaling. In the presence of ethylene, the auto-kinase activity of ETR1 is inhibited and the non-phosphorylated kinase domain binds tightly to the corresponding domain of EIN2. The protein is Ethylene receptor 1 of Arabidopsis thaliana (Mouse-ear cress).